The primary structure comprises 206 residues: Small ribosomal subunit protein uS4 (206 aa).

Residues 96 to 156 (GRLDNVVYRM…EKSKKQARIK (61 aa)) enclose the S4 RNA-binding domain.

It belongs to the universal ribosomal protein uS4 family. Part of the 30S ribosomal subunit. Contacts protein S5. The interaction surface between S4 and S5 is involved in control of translational fidelity.

In terms of biological role, one of the primary rRNA binding proteins, it binds directly to 16S rRNA where it nucleates assembly of the body of the 30S subunit. Functionally, with S5 and S12 plays an important role in translational accuracy. This chain is Small ribosomal subunit protein uS4, found in Histophilus somni (strain 2336) (Haemophilus somnus).